We begin with the raw amino-acid sequence, 192 residues long: Phosphoheptose isomerase (192 aa).

Positions 37–192 (LADSFKAGGK…IQLIEKEMVK (156 aa)) constitute an SIS domain. 52 to 54 (NGG) contacts substrate. 2 residues coordinate Zn(2+): His61 and Glu65. Substrate-binding positions include Glu65, 93–94 (ND), 119–121 (STS), Ser124, and Gln172. Zn(2+) contacts are provided by Gln172 and His180.

This sequence belongs to the SIS family. GmhA subfamily. Homotetramer. Zn(2+) serves as cofactor.

The protein localises to the cytoplasm. It carries out the reaction 2 D-sedoheptulose 7-phosphate = D-glycero-alpha-D-manno-heptose 7-phosphate + D-glycero-beta-D-manno-heptose 7-phosphate. It participates in carbohydrate biosynthesis; D-glycero-D-manno-heptose 7-phosphate biosynthesis; D-glycero-alpha-D-manno-heptose 7-phosphate and D-glycero-beta-D-manno-heptose 7-phosphate from sedoheptulose 7-phosphate: step 1/1. Its function is as follows. Catalyzes the isomerization of sedoheptulose 7-phosphate in D-glycero-D-manno-heptose 7-phosphate. The protein is Phosphoheptose isomerase of Salmonella dublin (strain CT_02021853).